Reading from the N-terminus, the 492-residue chain is Stromelysin-3 (492 aa).

The first 35 residues, 1 to 35, serve as a signal peptide directing secretion; that stretch reads MARAACLLRAISRVLLLPLPLLLLLLLLLPSPLMA. Positions 36-101 are cleaved as a propeptide — activation peptide; it reads RARPPESHRH…VLNARNRQKR (66 aa). Residues 82-89 carry the Cysteine switch motif; it reads LRCGVPDL. 3 residues coordinate Zn(2+): cysteine 84, histidine 168, and aspartate 170. Positions 175, 176, 178, and 180 each coordinate Ca(2+). The Zn(2+) site is built by histidine 183, histidine 196, and histidine 219. The active site involves glutamate 220. Residues histidine 223 and histidine 229 each coordinate Zn(2+). Hemopexin repeat units follow at residues 295–343, 344–386, 388–436, and 437–484; these read PDVC…WQGL, PSPV…KLGL, GSPV…WRGV, and PSEI…FFDC. The cysteines at positions 298 and 484 are disulfide-linked.

The protein belongs to the peptidase M10A family. The cofactor is Ca(2+). Zn(2+) serves as cofactor. In terms of processing, the precursor is cleaved by a furin endopeptidase. Specifically expressed in the mammary gland during apoptosis.

The protein localises to the secreted. It localises to the extracellular space. It is found in the extracellular matrix. Its function is as follows. May play an important role in the progression of epithelial malignancies. This Mus musculus (Mouse) protein is Stromelysin-3 (Mmp11).